A 248-amino-acid polypeptide reads, in one-letter code: 2,3-bisphosphoglycerate-dependent phosphoglycerate mutase (248 aa).

Substrate contacts are provided by residues Arg8–Asn15, Thr21–Gly22, Arg60, Glu87–Tyr90, Lys98, Arg114–Arg115, and Gly183–Asn184. His9 (tele-phosphohistidine intermediate) is an active-site residue. The active-site Proton donor/acceptor is Glu87.

It belongs to the phosphoglycerate mutase family. BPG-dependent PGAM subfamily. Homodimer.

It carries out the reaction (2R)-2-phosphoglycerate = (2R)-3-phosphoglycerate. It functions in the pathway carbohydrate degradation; glycolysis; pyruvate from D-glyceraldehyde 3-phosphate: step 3/5. Its function is as follows. Catalyzes the interconversion of 2-phosphoglycerate and 3-phosphoglycerate. The sequence is that of 2,3-bisphosphoglycerate-dependent phosphoglycerate mutase from Burkholderia vietnamiensis (strain G4 / LMG 22486) (Burkholderia cepacia (strain R1808)).